The following is a 93-amino-acid chain: Acylphosphatase (93 aa).

Residues 5 to 93 (CIIAWVHGRV…EELTGFRIRY (89 aa)) enclose the Acylphosphatase-like domain. Residues arginine 20 and asparagine 38 contribute to the active site.

The protein belongs to the acylphosphatase family.

It carries out the reaction an acyl phosphate + H2O = a carboxylate + phosphate + H(+). The protein is Acylphosphatase (acyP) of Citrobacter koseri (strain ATCC BAA-895 / CDC 4225-83 / SGSC4696).